The chain runs to 175 residues: Crossover junction endodeoxyribonuclease RuvC (175 aa).

Catalysis depends on residues Asp-8, Glu-68, and Asp-140. Positions 8, 68, and 140 each coordinate Mg(2+).

It belongs to the RuvC family. As to quaternary structure, homodimer which binds Holliday junction (HJ) DNA. The HJ becomes 2-fold symmetrical on binding to RuvC with unstacked arms; it has a different conformation from HJ DNA in complex with RuvA. In the full resolvosome a probable DNA-RuvA(4)-RuvB(12)-RuvC(2) complex forms which resolves the HJ. It depends on Mg(2+) as a cofactor.

The protein resides in the cytoplasm. The enzyme catalyses Endonucleolytic cleavage at a junction such as a reciprocal single-stranded crossover between two homologous DNA duplexes (Holliday junction).. Functionally, the RuvA-RuvB-RuvC complex processes Holliday junction (HJ) DNA during genetic recombination and DNA repair. Endonuclease that resolves HJ intermediates. Cleaves cruciform DNA by making single-stranded nicks across the HJ at symmetrical positions within the homologous arms, yielding a 5'-phosphate and a 3'-hydroxyl group; requires a central core of homology in the junction. The consensus cleavage sequence is 5'-(A/T)TT(C/G)-3'. Cleavage occurs on the 3'-side of the TT dinucleotide at the point of strand exchange. HJ branch migration catalyzed by RuvA-RuvB allows RuvC to scan DNA until it finds its consensus sequence, where it cleaves and resolves the cruciform DNA. This Pseudomonas fluorescens (strain Pf0-1) protein is Crossover junction endodeoxyribonuclease RuvC.